The sequence spans 709 residues: Alpha-1,2-mannosyltransferase MNN24 (709 aa).

At 1–9 (MFSIPVSSK) the chain is on the cytoplasmic side. The chain crosses the membrane as a helical span at residues 10–30 (TVRLILVSLLLITLINILAAF). Topologically, residues 31–709 (QRSTLSSWFP…KNHIEFLEIS (679 aa)) are extracellular. A glycan (N-linked (GlcNAc...) asparagine) is linked at asparagine 317.

The protein belongs to the MNN1/MNT family.

It localises to the golgi apparatus membrane. It participates in protein modification; protein glycosylation. Functionally, alpha-1,2-mannosyltransferase required for cell wall integrity. Responsible for addition of the first alpha-1,2-linked mannose to form the branches on the mannan backbone of oligosaccharides. Addition of alpha-1,2-mannose is required for stabilization of the alpha-1,6-mannose backbone and hence regulates mannan fibril length; and is important for both immune recognition and virulence. The chain is Alpha-1,2-mannosyltransferase MNN24 (MNN24) from Candida albicans (strain SC5314 / ATCC MYA-2876) (Yeast).